A 385-amino-acid polypeptide reads, in one-letter code: 8-amino-7-oxononanoate synthase (385 aa).

Arginine 21 lines the substrate pocket. Residue 108–109 (GF) coordinates pyridoxal 5'-phosphate. Histidine 133 provides a ligand contact to substrate. Residues serine 179, histidine 207, and threonine 233 each coordinate pyridoxal 5'-phosphate. Residue lysine 236 is modified to N6-(pyridoxal phosphate)lysine. Threonine 352 is a substrate binding site.

This sequence belongs to the class-II pyridoxal-phosphate-dependent aminotransferase family. BioF subfamily. Homodimer. It depends on pyridoxal 5'-phosphate as a cofactor.

The enzyme catalyses 6-carboxyhexanoyl-[ACP] + L-alanine + H(+) = (8S)-8-amino-7-oxononanoate + holo-[ACP] + CO2. Its pathway is cofactor biosynthesis; biotin biosynthesis. Its function is as follows. Catalyzes the decarboxylative condensation of pimeloyl-[acyl-carrier protein] and L-alanine to produce 8-amino-7-oxononanoate (AON), [acyl-carrier protein], and carbon dioxide. In Salmonella newport (strain SL254), this protein is 8-amino-7-oxononanoate synthase.